The sequence spans 474 residues: Nucleobindin-1 (474 aa).

The signal sequence occupies residues 1–24; it reads MPPSGPRAALFLLPSLLLLRAVLA. Phosphoserine is present on S83. The residue at position 145 (T145) is a Phosphothreonine. Residues 147-215 adopt a coiled-coil conformation; sequence EARDLELLIQ…QQRRHREHPK (69 aa). Residues 190 to 207 show a composition bias toward basic and acidic residues; sequence SLGEEQRKEAERKLEEQQ. Positions 190–218 are disordered; the sequence is SLGEEQRKEAERKLEEQQRRHREHPKVNV. The binds to GNAI2 and GNAI3 stretch occupies residues 225-318; it reads LKEVWEELDG…VTLEEFLAST (94 aa). 2 consecutive EF-hand domains span residues 237–272 and 289–324; these read PNRFNPKTFFILHDINSDGVLDEQELEALFTKELEK and ERLRMREHVMKNVDTNQDRLVTLEEFLASTQRKEFG. Residues D250, N252, D254, E261, D302, N304, D306, and E313 each contribute to the Ca(2+) site. A GBA motif is present at residues 300–330; that stretch reads NVDTNQDRLVTLEEFLASTQRKEFGDTGEGW. Residues 355-422 adopt a coiled-coil conformation; that stretch reads AYTEEELRRF…RKQQQQSHNN (68 aa). A disordered region spans residues 382 to 474; that stretch reads LSQETEALGR…EPPQLDSQHL (93 aa). Phosphoserine is present on S383. A compositionally biased stretch (basic and acidic residues) spans 448–460; it reads DQKDVDASEKKVP. Phosphoserine is present on S471.

The protein belongs to the nucleobindin family. In terms of assembly, interacts (via GBA motif) with guanine nucleotide-binding protein G(i) alpha subunits GNAI1, GNAI2 and GNAI3 with higher affinity for GNAI1 and GNAI3 than for GNAI2. Preferentially interacts with inactive rather than active GNAI3. Interaction with GNAI3 is inhibited when NUCB1 binds calcium, probably due to a conformational change which renders the GBA motif inaccessible. As to expression, expressed in bone where it is detected in the soft tissue in the center of the osteon and in the osteocyte lacuna (at protein level).

It is found in the golgi apparatus. It localises to the cis-Golgi network membrane. Its subcellular location is the cytoplasm. The protein resides in the secreted. Its function is as follows. Major calcium-binding protein of the Golgi which may have a role in calcium homeostasis. Acts as a non-receptor guanine nucleotide exchange factor which binds to and activates alpha subunits of guanine nucleotide-binding proteins (G proteins). This Bos taurus (Bovine) protein is Nucleobindin-1 (NUCB1).